The following is a 182-amino-acid chain: MRRLFLSHVLGAWLLLSQLPRELSGQKPDDVIKACGRELARLRIEICGSLSWKKTVLRLEEPGLEAGQPVEIVSSSISKDAEALNTKLGLNSNLPKEQKATLSERQPSWRELLQQPALKDSNLNLEEFEETILKTQSEVEDDSLSELKNLGLDKHSRKKRMIQLSHKCCYWGCTRKELARQC.

The N-terminal stretch at 1-25 is a signal peptide; it reads MRRLFLSHVLGAWLLLSQLPRELSG. Glutamine 26 carries the post-translational modification Pyrrolidone carboxylic acid. 3 cysteine pairs are disulfide-bonded: cysteine 35/cysteine 169, cysteine 47/cysteine 182, and cysteine 168/cysteine 173. Positions 54–156 are cleaved as a propeptide — connecting peptide; the sequence is KTVLRLEEPG…LKNLGLDKHS (103 aa). A propeptide spanning residues 161-162 is cleaved from the precursor; the sequence is MI. At glutamine 163 the chain carries Pyrrolidone carboxylic acid.

This sequence belongs to the insulin family. As to quaternary structure, heterodimer of a B chain and an A chain linked by two disulfide bonds.

It is found in the secreted. Relaxin is an ovarian hormone that acts with estrogen to produce dilatation of the birth canal in many mammals. The chain is Prorelaxin (RLN) from Equus caballus (Horse).